Consider the following 176-residue polypeptide: dCTP deaminase (176 aa).

Residues 102–107 (RSTFAR) and D118 each bind dCTP. E128 functions as the Proton donor/acceptor in the catalytic mechanism. Positions 160, 166, and 167 each coordinate dCTP.

The protein belongs to the dCTP deaminase family. Homotrimer.

The catalysed reaction is dCTP + H2O + H(+) = dUTP + NH4(+). It functions in the pathway pyrimidine metabolism; dUMP biosynthesis; dUMP from dCTP (dUTP route): step 1/2. Catalyzes the deamination of dCTP to dUTP. In Staphylothermus marinus (strain ATCC 43588 / DSM 3639 / JCM 9404 / F1), this protein is dCTP deaminase.